The chain runs to 179 residues: Large ribosomal subunit protein uL6 (179 aa).

The protein belongs to the universal ribosomal protein uL6 family. As to quaternary structure, part of the 50S ribosomal subunit.

Its function is as follows. This protein binds to the 23S rRNA, and is important in its secondary structure. It is located near the subunit interface in the base of the L7/L12 stalk, and near the tRNA binding site of the peptidyltransferase center. The sequence is that of Large ribosomal subunit protein uL6 from Akkermansia muciniphila (strain ATCC BAA-835 / DSM 22959 / JCM 33894 / BCRC 81048 / CCUG 64013 / CIP 107961 / Muc).